The following is a 100-amino-acid chain: Glutamyl-tRNA(Gln) amidotransferase subunit C (100 aa).

The protein belongs to the GatC family. As to quaternary structure, heterotrimer of A, B and C subunits.

The enzyme catalyses L-glutamyl-tRNA(Gln) + L-glutamine + ATP + H2O = L-glutaminyl-tRNA(Gln) + L-glutamate + ADP + phosphate + H(+). It carries out the reaction L-aspartyl-tRNA(Asn) + L-glutamine + ATP + H2O = L-asparaginyl-tRNA(Asn) + L-glutamate + ADP + phosphate + 2 H(+). In terms of biological role, allows the formation of correctly charged Asn-tRNA(Asn) or Gln-tRNA(Gln) through the transamidation of misacylated Asp-tRNA(Asn) or Glu-tRNA(Gln) in organisms which lack either or both of asparaginyl-tRNA or glutaminyl-tRNA synthetases. The reaction takes place in the presence of glutamine and ATP through an activated phospho-Asp-tRNA(Asn) or phospho-Glu-tRNA(Gln). This is Glutamyl-tRNA(Gln) amidotransferase subunit C from Rickettsia conorii (strain ATCC VR-613 / Malish 7).